A 168-amino-acid chain; its full sequence is uncharacterized protein (168 aa).

Disordered stretches follow at residues 37-74, 81-100, and 117-168; these read GGSK…SQFT, QYNY…PNYY, and MQPF…EETN. Polar residues-rich tracts occupy residues 52-74 and 82-95; these read HSGQ…SQFT and YNYN…TRSV. Low complexity predominate over residues 120–129; it reads FNNQSFNNQS. The segment covering 130–158 has biased composition (polar residues); sequence RTHQSKTYQHNQQKRSFNGPRNNGPQNNV.

This is an uncharacterized protein from Acanthamoeba polyphaga (Amoeba).